Here is a 349-residue protein sequence, read N- to C-terminus: Ion-translocating oxidoreductase complex subunit D (349 aa).

3 consecutive transmembrane segments (helical) span residues 36–56 (CAFFGWGTLIQVLLAIIVALS), 77–99 (SAMLTAILIGVAIPPLAPWWMIV), and 124–144 (AMAAYVLLLVSFPVQMTSWIA). Thr185 carries the post-translational modification FMN phosphoryl threonine. 5 helical membrane-spanning segments follow: residues 212–232 (GTGVGWFWVNLAYLAGGLVLL), 239–259 (WHISTGVLAGLFVASSIGFLL), 265–285 (ASPLFHLFSGATMLAAFFIAT), 291–311 (ATSPRGRLIFGALIGVLVYVI), and 315–335 (GGYPDAFAFAVLLANLCAPFI).

It belongs to the NqrB/RnfD family. As to quaternary structure, the complex is composed of six subunits: RnfA, RnfB, RnfC, RnfD, RnfE and RnfG. The cofactor is FMN.

The protein resides in the cell inner membrane. Its function is as follows. Part of a membrane-bound complex that couples electron transfer with translocation of ions across the membrane. This is Ion-translocating oxidoreductase complex subunit D from Shewanella sp. (strain MR-4).